We begin with the raw amino-acid sequence, 245 residues long: Thiopurine S-methyltransferase (245 aa).

At S14 the chain carries Phosphoserine. 29–40 (WREKWVDGKIGF) contributes to the S-adenosyl-L-methionine binding site. F40 is a binding site for substrate. The residue at position 58 (K58) is an N6-acetyllysine. 3 residues coordinate S-adenosyl-L-methionine: L69, E90, and R152.

This sequence belongs to the class I-like SAM-binding methyltransferase superfamily. TPMT family. As to quaternary structure, monomer.

The protein localises to the cytoplasm. The enzyme catalyses S-adenosyl-L-methionine + a thiopurine = S-adenosyl-L-homocysteine + a thiopurine S-methylether.. This chain is Thiopurine S-methyltransferase (TPMT), found in Panthera tigris (Tiger).